Reading from the N-terminus, the 835-residue chain is Leucine--tRNA ligase (835 aa).

A 'HIGH' region motif is present at residues 36–46 (PYPSGKIHVGH). A 'KMSKS' region motif is present at residues 602 to 606 (KMSKS). Residue K605 coordinates ATP.

It belongs to the class-I aminoacyl-tRNA synthetase family.

Its subcellular location is the cytoplasm. The enzyme catalyses tRNA(Leu) + L-leucine + ATP = L-leucyl-tRNA(Leu) + AMP + diphosphate. The polypeptide is Leucine--tRNA ligase (Rickettsia conorii (strain ATCC VR-613 / Malish 7)).